Here is a 166-residue protein sequence, read N- to C-terminus: Cyclic pyranopterin monophosphate synthase (166 aa).

Substrate is bound by residues 83-85 and 121-122; these read LCH and ME. Asp-136 is a catalytic residue.

This sequence belongs to the MoaC family. As to quaternary structure, homohexamer; trimer of dimers.

It catalyses the reaction (8S)-3',8-cyclo-7,8-dihydroguanosine 5'-triphosphate = cyclic pyranopterin phosphate + diphosphate. It participates in cofactor biosynthesis; molybdopterin biosynthesis. In terms of biological role, catalyzes the conversion of (8S)-3',8-cyclo-7,8-dihydroguanosine 5'-triphosphate to cyclic pyranopterin monophosphate (cPMP). The polypeptide is Cyclic pyranopterin monophosphate synthase (Trichodesmium erythraeum (strain IMS101)).